We begin with the raw amino-acid sequence, 133 residues long: Histone H2A (133 aa).

Positions Met1–Ala10 are enriched in gly residues. The disordered stretch occupies residues Met1–Leu25. An N6-acetyllysine mark is found at Lys5 and Lys9. The segment covering Ser11–Gly24 has biased composition (low complexity). Gln106 carries the N5-methylglutamine modification. Ser130 carries the post-translational modification Phosphoserine. A [ST]-Q motif motif is present at residues Ser130–Gln131.

This sequence belongs to the histone H2A family. The nucleosome is a histone octamer containing two molecules each of H2A, H2B, H3 and H4 assembled in one H3-H4 heterotetramer and two H2A-H2B heterodimers. The octamer wraps approximately 147 bp of DNA. Post-translationally, phosphorylated to form H2AS128ph (gamma-H2A) in response to DNA double-strand breaks (DSBs) generated by exogenous genotoxic agents and by stalled replication forks. Phosphorylation is dependent on the DNA damage checkpoint kinases MEC1/ATR and TEL1/ATM, spreads on either side of a detected DSB site and may mark the surrounding chromatin for recruitment of proteins required for DNA damage signaling and repair. Gamma-H2A is removed from the DNA prior to the strand invasion-primer extension step of the repair process and subsequently dephosphorylated. Dephosphorylation is necessary for efficient recovery from the DNA damage checkpoint. In terms of processing, acetylated by ESA1 to form H2AK4ac and H2AK7ac.

The protein resides in the nucleus. It localises to the chromosome. Functionally, core component of nucleosome which plays a central role in DNA double strand break (DSB) repair. Nucleosomes wrap and compact DNA into chromatin, limiting DNA accessibility to the cellular machineries which require DNA as a template. Histones thereby play a central role in transcription regulation, DNA repair, DNA replication and chromosomal stability. DNA accessibility is regulated via a complex set of post-translational modifications of histones, also called histone code, and nucleosome remodeling. This chain is Histone H2A (HTA1), found in Coccidioides immitis (strain RS) (Valley fever fungus).